We begin with the raw amino-acid sequence, 360 residues long: DAZ-associated protein 1 (360 aa).

RRM domains lie at 10–97 and 114–191; these read GKLF…RSRP and NKIF…RAEP. 2 disordered regions span residues 73-116 and 184-345; these read HTLD…SNKI and VEVK…DFPF. Basic and acidic residues-rich tracts occupy residues 91-112 and 184-195; these read QPER…ENSR and VEVKRAEPRDSK. Positions 203 to 231 are enriched in polar residues; sequence GSNQWGSRAMQSTANGWTGQPPQTWQGYS. Residues 242 to 253 are compositionally biased toward gly residues; sequence TIGGYGQPAGRG. The span at 271–301 shows a compositional bias: pro residues; that stretch reads GPFPPPQGFPPGYATPPPFGYGYGPPPPPPD. The span at 328–345 shows a compositional bias: polar residues; sequence QSAQDLSKPPSGQQDFPF.

Component of a mRNP complex, at least composed of DAZAP1, IGF2BP3-A, STAU and VgRBP60. Binds to the 3'-UTR of Vg1 mRNA. Interacts with profilin, a protein involved in actin assembly. Interacts with VgRBP71. Expressed in oocytes.

It is found in the cytoplasm. RNA-binding protein, which is required during gametogenesis. May be involved in the actin-dependent anchoring of Vg1 mRNA in the vegetal cortex of the oocyte. The protein is DAZ-associated protein 1 (dazap1) of Xenopus laevis (African clawed frog).